Consider the following 136-residue polypeptide: Large ribosomal subunit protein uL16 (136 aa).

It belongs to the universal ribosomal protein uL16 family. In terms of assembly, part of the 50S ribosomal subunit.

Its function is as follows. Binds 23S rRNA and is also seen to make contacts with the A and possibly P site tRNAs. This chain is Large ribosomal subunit protein uL16, found in Rickettsia massiliae (strain Mtu5).